Here is a 64-residue protein sequence, read N- to C-terminus: Alpha-conotoxin-like Lp1.8 (64 aa).

An N-terminal signal peptide occupies residues 1 to 21 (MGMRMMFTMFLLVVLTTTVVS). The propeptide occupies 22–41 (FNSDRESNHENRRTSNQITR). Cystine bridges form between Cys47/Cys53 and Cys48/Cys61. The segment at 49–51 (KDP) is lacks the Ser-Xaa-Pro motif that is crucial for potent interaction with nAChR.

It belongs to the conotoxin A superfamily. As to expression, expressed by the venom duct.

It localises to the secreted. In terms of biological role, alpha-conotoxins act on postsynaptic membranes, they bind to the nicotinic acetylcholine receptors (nAChR) and thus inhibit them. Has possibly a distinct nAChR binding mode from other alpha-conotoxins, due to a different three residue motif (Lys-Xaa-Pro instead of the conserved Ser-Xaa-Pro motif). The sequence is that of Alpha-conotoxin-like Lp1.8 from Conus leopardus (Leopard cone).